Consider the following 116-residue polypeptide: Large ribosomal subunit protein uL18 (116 aa).

Belongs to the universal ribosomal protein uL18 family. As to quaternary structure, part of the 50S ribosomal subunit; part of the 5S rRNA/L5/L18/L25 subcomplex. Contacts the 5S and 23S rRNAs.

Its function is as follows. This is one of the proteins that bind and probably mediate the attachment of the 5S RNA into the large ribosomal subunit, where it forms part of the central protuberance. The protein is Large ribosomal subunit protein uL18 of Shewanella halifaxensis (strain HAW-EB4).